We begin with the raw amino-acid sequence, 516 residues long: Maturase K (516 aa).

The protein belongs to the intron maturase 2 family. MatK subfamily.

Its subcellular location is the plastid. The protein localises to the chloroplast. Usually encoded in the trnK tRNA gene intron. Probably assists in splicing its own and other chloroplast group II introns. The polypeptide is Maturase K (Chara globularis (Fragile stonewort)).